A 177-amino-acid polypeptide reads, in one-letter code: MNTKITNFTFAFDKKNLNLAETIIKKYPPEGKRSAILPLLDLAQRQNGGWLHVSAIEYVANMLEMPYMRAYEVATFYTMFNLNPIGKYHIQVCTTTPCWLRGSDNIMKICEKKLAIKHKETTKDQKFTLSEIECLGACVNAPVVQINDDYYEDLNEAKMEKLIEQYLNEFKSKMQNG.

C93, C98, C134, and C138 together coordinate [2Fe-2S] cluster.

It belongs to the complex I 24 kDa subunit family. It depends on [2Fe-2S] cluster as a cofactor.

It carries out the reaction a quinone + NADH + 5 H(+)(in) = a quinol + NAD(+) + 4 H(+)(out). NDH-1 shuttles electrons from NADH, via FMN and iron-sulfur (Fe-S) centers, to quinones in the respiratory chain. Couples the redox reaction to proton translocation (for every two electrons transferred, four hydrogen ions are translocated across the cytoplasmic membrane), and thus conserves the redox energy in a proton gradient. This Rickettsia prowazekii (strain Madrid E) protein is NADH-quinone oxidoreductase subunit E (nuoE).